We begin with the raw amino-acid sequence, 478 residues long: UDP-N-acetylmuramate--L-alanine ligase (478 aa).

112-118 provides a ligand contact to ATP; that stretch reads GTHGKTT.

This sequence belongs to the MurCDEF family.

Its subcellular location is the cytoplasm. It catalyses the reaction UDP-N-acetyl-alpha-D-muramate + L-alanine + ATP = UDP-N-acetyl-alpha-D-muramoyl-L-alanine + ADP + phosphate + H(+). It functions in the pathway cell wall biogenesis; peptidoglycan biosynthesis. Cell wall formation. In Polynucleobacter asymbioticus (strain DSM 18221 / CIP 109841 / QLW-P1DMWA-1) (Polynucleobacter necessarius subsp. asymbioticus), this protein is UDP-N-acetylmuramate--L-alanine ligase.